Reading from the N-terminus, the 500-residue chain is Versicolorin B desaturase (500 aa).

Residues 3-23 traverse the membrane as a helical segment; that stretch reads FLSLPSLVIVIPVGYLLFHLG. 2 N-linked (GlcNAc...) asparagine glycosylation sites follow: N243 and N400. Position 438 (C438) interacts with heme.

The protein belongs to the cytochrome P450 family. Requires heme as cofactor.

The protein resides in the membrane. It catalyses the reaction versicolorin B + NADPH + O2 + H(+) = versicolorin A + NADP(+) + 2 H2O. Its pathway is mycotoxin biosynthesis; aflatoxin biosynthesis. Versicolorin B desaturase; part of the gene cluster that mediates the biosynthesis of aflatoxins, a group of polyketide-derived furanocoumarins, and part of the most toxic and carcinogenic compounds among the known mycotoxins. The four major aflatoxins produced by A.parasiticus are aflatoxin B1 (AFB1), aflatoxin B2 (AFB2), aflatoxin G1 (AFG1) and aflatoxin G2 (AFG2). Within the aflatoxin pathway, the versicolorin B desaturase aflL catalyzes the conversion of versicolorin B (VERB) to versicolorin A (VERA). The biosynthesis of aflatoxins begins with the norsolorinic acid synthase aflC that combines a hexanoyl starter unit produced by the fatty acid synthase aflA/aflB and 7 malonyl-CoA extender units to synthesize the precursor NOR. The second step is the conversion of NOR to averantin and requires the norsolorinic acid ketoreductase aflD, which catalyzes the dehydration of norsolorinic acid to form (1'S)-averantin. The norsolorinic acid reductases aflE and aflF may also play a role in the conversion of NOR to AVN. The cytochrome P450 monooxygenase aflG then catalyzes the hydroxylation of AVN to 5'hydroxyaverantin (HAVN). The next step is performed by the 5'-hydroxyaverantin dehydrogenase aflH that transforms HAVN to 5'-oxoaverantin (OAVN) which is further converted to averufin (AVF) by aflK that plays a dual role in the pathway, as a 5'-oxoaverantin cyclase that mediates conversion of 5'-oxoaverantin, as well as a versicolorin B synthase in a later step in the pathway. The averufin oxidase aflI catalyzes the conversion of AVF to versiconal hemiacetal acetate (VHA). VHA is then the substrate for the versiconal hemiacetal acetate esterase aflJ to yield versiconal (VAL). Versicolorin B synthase aflK then converts VAL to versicolorin B (VERB) by closing the bisfuran ring of aflatoxin which is required for DNA-binding, thus giving to aflatoxin its activity as a mutagen. Then, the activity of the versicolorin B desaturase aflL leads to versicolorin A (VERA). A branch point starts from VERB since it can also be converted to dihydrodemethylsterigmatocystin (DMDHST), probably also by aflL, VERA being a precursor for aflatoxins B1 and G1, and DMDHST for aflatoxins B2 and G2. Next, the versicolorin reductase aflM and the cytochrome P450 monooxygenase aflN are involved in conversion of VERA to demethylsterigmatocystin (DMST). AflX and aflY seem also involved in this step, through probable aflX-mediated epoxide ring-opening step following versicolorin A oxidation and aflY-mediated Baeyer-Villiger oxidation required for the formation of the xanthone ring. The methyltransferase aflO then leads to the modification of DMST to sterigmatocystin (ST), and of DMDHST to dihydrosterigmatocystin (DHST). Both ST and DHST are then substrates of the O-methyltransferase aflP to yield O-methylsterigmatocystin (OMST) and dihydro-O-methylsterigmatocystin (DHOMST), respectively. Finally OMST is converted to aflatoxins B1 and G1, and DHOMST to aflatoxins B2 and G2, via the action of several enzymes including O-methylsterigmatocystin oxidoreductase aflQ, the cytochrome P450 monooxygenase aflU, but also the NADH-dependent flavin oxidoreductase nadA which is specifically required for the synthesis of AFG1. This chain is Versicolorin B desaturase, found in Aspergillus parasiticus (strain ATCC 56775 / NRRL 5862 / SRRC 143 / SU-1).